The chain runs to 132 residues: Dinoflagellate viral nucleoprotein 5 (132 aa).

Residues Met1 to Lys44 are compositionally biased toward basic residues. The tract at residues Met1 to Ile84 is disordered. Residues Gly57–Lys66 show a composition bias toward polar residues.

Post-translationally, phosphorylated.

It localises to the nucleus. Its subcellular location is the chromosome. In terms of biological role, DNA-binding protein, which similarly to histones, may compact DNA into chromatin. This is Dinoflagellate viral nucleoprotein 5 from Hematodinium sp.